The sequence spans 592 residues: Transmembrane 9 superfamily member 2 (592 aa).

Positions 1–24 (MRTPTTILLLVGAILFSGAGYVRS) are cleaved as a signal peptide. The Lumenal segment spans residues 25–229 (DASDHRYKEG…SLPHHLEIHW (205 aa)). Residues 230-250 (FSIINSCVTVLLLTGFLATIL) form a helical membrane-spanning segment. Residues 251-302 (MRVLKNDFMKYAQDEEAADDQEETGWKYIHGDVFRFPTHNSLFAASLGSGTQ) are Cytoplasmic-facing. A helical membrane pass occupies residues 303 to 323 (LFTLTIFIFMLALVGVFYPYN). A topological domain (lumenal) is located at residue Arg324. Residues 325–345 (GALFTALVVIYALTSGIAGYT) form a helical membrane-spanning segment. Topologically, residues 346 to 362 (SASFYCQLEGKSWVRNL) are cytoplasmic. A helical membrane pass occupies residues 363–383 (LLTGCLFCGPLFLTFCFLNTV). Residues 384–397 (AITYTATAALPFGT) lie on the Lumenal side of the membrane. The chain crosses the membrane as a helical span at residues 398–418 (IVVIVLIWTLVTSPLLVLGGI). The Cytoplasmic portion of the chain corresponds to 419–452 (AGKNSKAEFQAPCRTTKYPREIPPLPWYRSAIPQ). A helical transmembrane segment spans residues 453–473 (MAMAGFLPFSAIYIELYYIFA). The Lumenal portion of the chain corresponds to 474-485 (SVWGHRIYTIYS). Residues 486-506 (ILFIVFIILIIVTAFITVALT) form a helical membrane-spanning segment. Residues 507–521 (YFQLAAEDHQWWWRS) are Cytoplasmic-facing. Residues 522-542 (FLCGGSTGLFIYAYCLYYYYA) form a helical membrane-spanning segment. At 543 to 553 (RSDMSGFMQTS) the chain is on the lumenal side. The helical transmembrane segment at 554–574 (FFFGYMACICYGFFLMLGTVG) threads the bilayer. The Cytoplasmic portion of the chain corresponds to 575 to 592 (FRAALLFVRHIYRSIKCE). The short motif at 581 to 586 (FVRHIY) is the Endoplasmic reticulum export signal element. The Golgi retention signal motif lies at 590-592 (KCE).

Belongs to the nonaspanin (TM9SF) (TC 9.A.2) family.

The protein resides in the endosome membrane. Its subcellular location is the golgi apparatus membrane. The polypeptide is Transmembrane 9 superfamily member 2 (Arabidopsis thaliana (Mouse-ear cress)).